The primary structure comprises 568 residues: Cytosolic purine 5'-nucleotidase (568 aa).

Asp-52 acts as the Nucleophile in catalysis. 2 residues coordinate IMP: Asp-52 and Asp-54. Residues Asp-52 and Asp-54 each coordinate Mg(2+). Asp-54 (proton donor) is an active-site residue. Arg-144 and Asn-154 together coordinate ATP. Positions 202, 206, 215, 249, 250, 251, and 292 each coordinate IMP. Asp-351 is a Mg(2+) binding site. Residues Gln-453 and Arg-456 each coordinate ATP. The tract at residues Ile-528–Glu-568 is disordered. The tract at residues His-548–Glu-568 is required for tetramer assembly. Residues Glu-550–Glu-568 are compositionally biased toward acidic residues.

This sequence belongs to the 5'(3')-deoxyribonucleotidase family. Homotetramer. Requires Mg(2+) as cofactor.

It localises to the cytoplasm. The protein localises to the cytosol. The enzyme catalyses a ribonucleoside 5'-phosphate + H2O = a ribonucleoside + phosphate. It carries out the reaction a 2'-deoxyribonucleoside + a ribonucleoside 5'-phosphate = a ribonucleoside + a 2'-deoxyribonucleoside 5'-phosphate. The catalysed reaction is IMP + H2O = inosine + phosphate. It catalyses the reaction GMP + H2O = guanosine + phosphate. The enzyme catalyses dIMP + H2O = 2'-deoxyinosine + phosphate. It carries out the reaction dGMP + H2O = 2'-deoxyguanosine + phosphate. The catalysed reaction is XMP + H2O = xanthosine + phosphate. It catalyses the reaction inosine + GMP = guanosine + IMP. The enzyme catalyses dGMP + inosine = 2'-deoxyguanosine + IMP. It carries out the reaction dIMP + inosine = 2'-deoxyinosine + IMP. The catalysed reaction is inosine + UMP = uridine + IMP. It catalyses the reaction inosine + CMP = cytidine + IMP. The enzyme catalyses inosine + AMP = IMP + adenosine. Allosterically activated by various compounds including ATP, 2,3-BPG/2,3-Bisphosphoglyceric acid and Ap4A/P1,P4-bis(5'-adenosyl) tetraphosphate. Binding of an allosteric activator is a prerequisiste to magnesium and substrate binding. Inhibited by inorganic phosphate. In terms of biological role, broad specificity cytosolic 5'-nucleotidase that catalyzes the dephosphorylation of 6-hydroxypurine nucleoside 5'-monophosphates. In addition, possesses a phosphotransferase activity by which it can transfer a phosphate from a donor nucleoside monophosphate to an acceptor nucleoside, preferably inosine, deoxyinosine and guanosine. Has the highest activities for IMP and GMP followed by dIMP, dGMP and XMP. Could also catalyze the transfer of phosphates from pyrimidine monophosphates but with lower efficiency. Through these activities regulates the purine nucleoside/nucleotide pools within the cell. The protein is Cytosolic purine 5'-nucleotidase (nt5c2) of Xenopus tropicalis (Western clawed frog).